We begin with the raw amino-acid sequence, 147 residues long: Sec-independent protein translocase protein TatB (147 aa).

The helical transmembrane segment at 2 to 22 (FSSIGWPEIFTVLILGLIIIG) threads the bilayer. The tract at residues 96-147 (FDPKKIMASGTEGEAYRERGINPQPAGDSASPQTPSNKESQPKAGFSWDDIT) is disordered. A compositionally biased stretch (polar residues) spans 125–134 (ASPQTPSNKE).

This sequence belongs to the TatB family. As to quaternary structure, the Tat system comprises two distinct complexes: a TatABC complex, containing multiple copies of TatA, TatB and TatC subunits, and a separate TatA complex, containing only TatA subunits. Substrates initially bind to the TatABC complex, which probably triggers association of the separate TatA complex to form the active translocon.

It localises to the cell membrane. In terms of biological role, part of the twin-arginine translocation (Tat) system that transports large folded proteins containing a characteristic twin-arginine motif in their signal peptide across membranes. Together with TatC, TatB is part of a receptor directly interacting with Tat signal peptides. TatB may form an oligomeric binding site that transiently accommodates folded Tat precursor proteins before their translocation. The chain is Sec-independent protein translocase protein TatB from Corynebacterium diphtheriae (strain ATCC 700971 / NCTC 13129 / Biotype gravis).